The chain runs to 86 residues: Insulin (86 aa).

Cystine bridges form between Cys-7-Cys-72, Cys-19-Cys-85, and Cys-71-Cys-76. Residues 33–63 constitute a propeptide, c peptide; it reads ELEDPQVGQADPGVVPEAGRLQPLALEMTLQ.

It belongs to the insulin family. Heterodimer of a B chain and an A chain linked by two disulfide bonds.

The protein localises to the secreted. Functionally, insulin decreases blood glucose concentration. It increases cell permeability to monosaccharides, amino acids and fatty acids. It accelerates glycolysis, the pentose phosphate cycle, and glycogen synthesis in liver. This Chinchilla chinchilla (Short-tailed chinchilla) protein is Insulin (INS).